A 152-amino-acid chain; its full sequence is UPF0178 protein YaiI (152 aa).

It belongs to the UPF0178 family.

This Shigella flexneri protein is UPF0178 protein YaiI.